The chain runs to 318 residues: Homoserine kinase (318 aa).

97 to 107 contributes to the ATP binding site; that stretch reads PIGSGLGSSAC.

The protein belongs to the GHMP kinase family. Homoserine kinase subfamily.

The protein resides in the cytoplasm. It carries out the reaction L-homoserine + ATP = O-phospho-L-homoserine + ADP + H(+). Its pathway is amino-acid biosynthesis; L-threonine biosynthesis; L-threonine from L-aspartate: step 4/5. Its function is as follows. Catalyzes the ATP-dependent phosphorylation of L-homoserine to L-homoserine phosphate. The protein is Homoserine kinase of Vibrio parahaemolyticus serotype O3:K6 (strain RIMD 2210633).